The chain runs to 712 residues: Ribosomal RNA large subunit methyltransferase K/L (712 aa).

In terms of domain architecture, THUMP spans 46–157; it reads GAYQALLHSR…RENMVVSLDL (112 aa).

It belongs to the methyltransferase superfamily. RlmKL family.

It is found in the cytoplasm. The catalysed reaction is guanosine(2445) in 23S rRNA + S-adenosyl-L-methionine = N(2)-methylguanosine(2445) in 23S rRNA + S-adenosyl-L-homocysteine + H(+). The enzyme catalyses guanosine(2069) in 23S rRNA + S-adenosyl-L-methionine = N(2)-methylguanosine(2069) in 23S rRNA + S-adenosyl-L-homocysteine + H(+). In terms of biological role, specifically methylates the guanine in position 2445 (m2G2445) and the guanine in position 2069 (m7G2069) of 23S rRNA. This is Ribosomal RNA large subunit methyltransferase K/L from Actinobacillus pleuropneumoniae serotype 7 (strain AP76).